We begin with the raw amino-acid sequence, 406 residues long: MFVQEEKIFAGKGLRLHICSLDGAEWLEEVTEEITVEKLKEKCLKHCSHGSLEDPKSLTHHKLVHASSERVLSDTKTLAEENLQDNDVLLLVKKRAPPPTPKMAEVSADEKRKQDQKAPDKDAILKATAGLPARSTDRTVAQHNMRDFQTELRKILVSLIEVAQKLLALNPDAIELFKKANAMLDEDDEDRVDEVALRQLTEMGFPESRAVKALRLNHMSVTQAMEWLIEHADDPAADAPLPCENSSEAAGGLATGEAETKPTLGAGAEDPKDELTEIFKKIRRKREFRPDPRAVIALMEMGFDEKEVIDALRVNNNQQDAACEWLLGDRKPSPEDLDKGIDTTSPLFQAILDNPVVQLGLTNPKTLLAFEDMLENPLNSTQWMNDPETGPVMLQISRIFQTLNRT.

Residues 14–98 (LRLHICSLDG…LLLVKKRAPP (85 aa)) form the Ubiquitin-like domain. Positions 95-122 (RAPPPTPKMAEVSADEKRKQDQKAPDKD) are disordered. Basic and acidic residues predominate over residues 108 to 122 (ADEKRKQDQKAPDKD). The UBA 1 domain occupies 186 to 231 (EDDEDRVDEVALRQLTEMGFPESRAVKALRLNHMSVTQAMEWLIEH). The span at 238 to 257 (DAPLPCENSSEAAGGLATGE) shows a compositional bias: low complexity. The tract at residues 238–272 (DAPLPCENSSEAAGGLATGEAETKPTLGAGAEDPK) is disordered. The UBA 2 domain occupies 289–329 (RPDPRAVIALMEMGFDEKEVIDALRVNNNQQDAACEWLLGD). The STI1 domain maps to 354 to 393 (NPVVQLGLTNPKTLLAFEDMLENPLNSTQWMNDPETGPVM).

Component of the KPC complex.

It localises to the cytoplasm. It participates in protein modification; protein ubiquitination. Its function is as follows. Non-catalytic component of the KPC complex, a E3 ubiquitin-protein ligase complex that mediates polyubiquitination of target proteins, such as CDKN1B and NFKB1. Within the KPC complex, UBAC1 acts as an adapter that promotes the transfer of target proteins that have been polyubiquitinated by RNF123/KPC1 to the 26S proteasome. The protein is Ubiquitin-associated domain-containing protein 1 (ubac1) of Xenopus tropicalis (Western clawed frog).